We begin with the raw amino-acid sequence, 169 residues long: Large ribosomal subunit protein uL10 (169 aa).

It belongs to the universal ribosomal protein uL10 family. Part of the 50S ribosomal subunit.

This chain is Large ribosomal subunit protein uL10 (rplJ), found in Deinococcus radiodurans (strain ATCC 13939 / DSM 20539 / JCM 16871 / CCUG 27074 / LMG 4051 / NBRC 15346 / NCIMB 9279 / VKM B-1422 / R1).